A 267-amino-acid polypeptide reads, in one-letter code: Glutamate 5-kinase (267 aa).

K14 is a binding site for ATP. Residues S54, D141, and N157 each contribute to the substrate site. ATP is bound by residues 177–178 (SD) and 219–225 (TGGMLSK).

The protein belongs to the glutamate 5-kinase family.

It localises to the cytoplasm. It carries out the reaction L-glutamate + ATP = L-glutamyl 5-phosphate + ADP. It participates in amino-acid biosynthesis; L-proline biosynthesis; L-glutamate 5-semialdehyde from L-glutamate: step 1/2. Functionally, catalyzes the transfer of a phosphate group to glutamate to form L-glutamate 5-phosphate. The protein is Glutamate 5-kinase of Streptococcus agalactiae serotype Ia (strain ATCC 27591 / A909 / CDC SS700).